The following is a 515-amino-acid chain: UBP3-associated protein BRE5 (515 aa).

The NTF2 domain maps to 8-140 (ICFAFLQNYY…FDITNDIIRF (133 aa)). Low complexity predominate over residues 157–166 (QSNEENSVSA). 2 disordered regions span residues 157 to 410 (QSNE…PVFS) and 485 to 515 (KTVKKPTSNNPPGIFTNGTRSHRKQPLKRKD). Positions 168-201 (EEDKIRHESGVEKEKEKEKSPEISKPKAKKETVK) are enriched in basic and acidic residues. Residue Ser-187 is modified to Phosphoserine. Residues 202 to 213 (DTTAPTESSTQE) are compositionally biased toward polar residues. Basic and acidic residues-rich tracts occupy residues 262 to 282 (LNEKSHKAEKKAAPIKTKEGS) and 299 to 319 (EVSDEKPVPGGVKEAETEIKP). A Phosphoserine modification is found at Ser-282. A compositionally biased stretch (polar residues) spans 330 to 341 (SGNNASTPSSSP). Position 336 is a phosphothreonine (Thr-336). Position 340 is a phosphoserine (Ser-340). Residues 374–396 (IRPETLPKKPTERKFEMGNRRDN) show a composition bias toward basic and acidic residues. Ser-398 bears the Phosphoserine mark. One can recognise an RRM domain in the interval 418-494 (YPIYIRGTNG…KTVKKPTSNN (77 aa)). The segment covering 489 to 503 (KPTSNNPPGIFTNGT) has biased composition (polar residues). Over residues 504–515 (RSHRKQPLKRKD) the composition is skewed to basic residues.

As to quaternary structure, heterotetramer with UBP3; contains two molecules of BRE5 and two molecules of UBP3. Forms a complex composed of CDC48, DOA1, deubiquitinase UBP3 and probably BRE5. Within the complex, interacts (via C-terminus) with CDC48; the interaction is direct and UBP3-independent.

Functionally, has a role in de-ubiquitination. In conjunction with UBP3, cleaves ubiquitin, leading to the subsequent mono-ubiquitination of sec23. This Saccharomyces cerevisiae (strain ATCC 204508 / S288c) (Baker's yeast) protein is UBP3-associated protein BRE5 (BRE5).